Here is a 110-residue protein sequence, read N- to C-terminus: Multidrug transporter EmrE (110 aa).

Transmembrane regions (helical) follow at residues 4–21 (YIYLGGAILAEVIGTTLM), 34–52 (VGTIICYCASFWLLAQTLA), 58–80 (IAYAIWSGVGIVLISLLSWGFFG), and 87–104 (AIIGMMLICAGVLIINLL).

This sequence belongs to the drug/metabolite transporter (DMT) superfamily. Small multidrug resistance (SMR) (TC 2.A.7.1) family. Homodimer. Forms an antiparallel dimeric structure. Also forms dimers of homodimers.

The protein resides in the cell inner membrane. Substrate identity influences both the ground-state and transition-state energies for the conformational exchange process, emphasizing the coupling between substrate binding and transport. In terms of biological role, multidrug efflux protein that confers resistance to a wide range of toxic compounds, including ethidium, methyl viologen, acriflavine, tetraphenylphosphonium (TPP(+)), benzalkonium, propidium, dequalinium and the aminoglycoside antibiotics streptomycin and tobramycin. Can also transport the osmoprotectants betaine and choline. The drug efflux is coupled to an influx of protons. Can couple antiport of a drug to either one or two protons, performing both electrogenic and electroneutral transport of a single substrate. Simultaneously binds and cotransports proton and drug. The sequence is that of Multidrug transporter EmrE (emrE) from Escherichia coli (strain K12).